The chain runs to 159 residues: Endoribonuclease YbeY (159 aa).

His125, His129, and His135 together coordinate Zn(2+).

The protein belongs to the endoribonuclease YbeY family. Zn(2+) serves as cofactor.

It is found in the cytoplasm. Its function is as follows. Single strand-specific metallo-endoribonuclease involved in late-stage 70S ribosome quality control and in maturation of the 3' terminus of the 16S rRNA. This is Endoribonuclease YbeY from Brevibacillus brevis (strain 47 / JCM 6285 / NBRC 100599).